Reading from the N-terminus, the 630-residue chain is UvrABC system protein C (630 aa).

The interval 1–96 (MGAEGLQGEG…GEAHRRGGTG (96 aa)) is disordered. Positions 9–28 (EGEVPPQGAGVPGQVQVGVH) are enriched in low complexity. The 74-residue stretch at 52-125 (DPRGLPVEAG…IKAHRPLYNV (74 aa)) folds into the GIY-YIG domain. Basic and acidic residues predominate over residues 75–91 (RPGEKLLPRRGQGEAHR). In terms of domain architecture, UVR spans 234 to 269 (DGLLQELEAKMREAARRLEFERAAEIRDQMEALRAF).

The protein belongs to the UvrC family. As to quaternary structure, interacts with UvrB in an incision complex.

The protein localises to the cytoplasm. Its function is as follows. The UvrABC repair system catalyzes the recognition and processing of DNA lesions. UvrC both incises the 5' and 3' sides of the lesion. The N-terminal half is responsible for the 3' incision and the C-terminal half is responsible for the 5' incision. The sequence is that of UvrABC system protein C from Thermus thermophilus (strain ATCC BAA-163 / DSM 7039 / HB27).